We begin with the raw amino-acid sequence, 483 residues long: Keratin, type II cytoskeletal 7 (483 aa).

Ser-2 is modified (N-acetylserine). Phosphoserine is present on residues Ser-2, Ser-6, and Ser-7. The interval 2-107 (SVQFSSQTFS…DPQIQQVRKE (106 aa)) is head. O-linked (GlcNAc) serine glycosylation occurs at Ser-12. The disordered stretch occupies residues 14–37 (SAAFPRRGGQGRLSSVSSRAGSVS). Arg-20 carries the post-translational modification Dimethylated arginine; alternate. Arg-20 bears the Omega-N-methylarginine; alternate mark. Residues 25-37 (RLSSVSSRAGSVS) are compositionally biased toward low complexity. 2 positions are modified to phosphoserine: Ser-63 and Ser-88. A coil 1A region spans residues 107 to 143 (EEREQIKTLNNKFASFIDKVRFLEQQNQMLETKWRLL). One can recognise an IF rod domain in the interval 108–420 (EREQIKTLNN…KLLEGEESRL (313 aa)). Phosphothreonine is present on Thr-114. The segment at 144 to 161 (QEQKSSKGSSLPAIFEAH) is linker 1. A Glycyl lysine isopeptide (Lys-Gly) (interchain with G-Cter in SUMO2) cross-link involves residue Lys-147. Residues 162 to 253 (IANLRRQLDG…TLYEMELNEL (92 aa)) are coil 1B. Lys-196 bears the N6-acetyllysine mark. The tract at residues 254–277 (QTQISDTSVVLSMDNSRSLDLDSI) is linker 12. Phosphoserine occurs at positions 269 and 271. The interval 278–416 (ISEVKAQYED…ATYRKLLEGE (139 aa)) is coil 2. Residues Lys-282 and Lys-303 each participate in a glycyl lysine isopeptide (Lys-Gly) (interchain with G-Cter in SUMO2) cross-link. The residue at position 306 (Thr-306) is a Phosphothreonine. Glycyl lysine isopeptide (Lys-Gly) (interchain with G-Cter in SUMO2) cross-links involve residues Lys-313 and Lys-348. The segment at 417-483 (ESRLSGDGVG…TSSSRRSVRN (67 aa)) is tail.

The protein belongs to the intermediate filament family. In terms of assembly, heterotetramer of two type I and two type II keratins. Interacts with eukaryotic translation initiator factor 3 (eIF3) subunit EIF3S10. Interacts with GPER1. Arg-20 is dimethylated, probably to asymmetric dimethylarginine.

In terms of biological role, blocks interferon-dependent interphase and stimulates DNA synthesis in cells. This chain is Keratin, type II cytoskeletal 7, found in Potorous tridactylus (Potoroo).